A 238-amino-acid chain; its full sequence is Phosphoribosylaminoimidazole-succinocarboxamide synthase (238 aa).

It belongs to the SAICAR synthetase family.

The catalysed reaction is 5-amino-1-(5-phospho-D-ribosyl)imidazole-4-carboxylate + L-aspartate + ATP = (2S)-2-[5-amino-1-(5-phospho-beta-D-ribosyl)imidazole-4-carboxamido]succinate + ADP + phosphate + 2 H(+). It functions in the pathway purine metabolism; IMP biosynthesis via de novo pathway; 5-amino-1-(5-phospho-D-ribosyl)imidazole-4-carboxamide from 5-amino-1-(5-phospho-D-ribosyl)imidazole-4-carboxylate: step 1/2. The chain is Phosphoribosylaminoimidazole-succinocarboxamide synthase from Chlorobium phaeovibrioides (strain DSM 265 / 1930) (Prosthecochloris vibrioformis (strain DSM 265)).